We begin with the raw amino-acid sequence, 751 residues long: Semaphorin-3C (751 aa).

The first 20 residues, 1–20 (MAFRAICVLVGVFICSICVR), serve as a signal peptide directing secretion. The Sema domain occupies 28–511 (RVYLTFDELR…SNEGVSQVSL (484 aa)). Asn-81 is a glycosylation site (N-linked (GlcNAc...) asparagine). Cys-101 and Cys-112 form a disulfide bridge. The N-linked (GlcNAc...) asparagine glycan is linked to Asn-123. Cys-130 and Cys-139 are joined by a disulfide. N-linked (GlcNAc...) asparagine glycosylation is found at Asn-252 and Asn-268. Cystine bridges form between Cys-266-Cys-378 and Cys-290-Cys-338. Residue Asn-465 is glycosylated (N-linked (GlcNAc...) asparagine). A disulfide bridge connects residues Cys-514 and Cys-532. An Ig-like C2-type domain is found at 571–655 (AYRNAAEIVQ…TENSFKQTIA (85 aa)). 2 N-linked (GlcNAc...) asparagine glycosylation sites follow: Asn-585 and Asn-586. Cysteines 643 and 709 form a disulfide.

The protein belongs to the semaphorin family. As to quaternary structure, interacts with PLXND1.

The protein resides in the secreted. Binds to plexin family members and plays an important role in the regulation of developmental processes. Required for normal cardiovascular development during embryogenesis. Functions as attractant for growing axons, and thereby plays an important role in axon growth and axon guidance. In Mus musculus (Mouse), this protein is Semaphorin-3C (Sema3c).